Reading from the N-terminus, the 311-residue chain is Giardin subunit alpha-8 (311 aa).

Annexin repeat units lie at residues 5 to 73, 75 to 146, 154 to 223, and 227 to 295; these read RKAY…IRCW, NRHE…DRWM, NNVK…AAHY, and EPSK…SLWR.

The protein belongs to the annexin family. Giardin subunit alpha subfamily.

It is found in the cytoplasm. The protein localises to the cytoskeleton. Giardins are involved in parasite attachment to the intestinal mucosa and in the cytoskeletal disassembly and reassembly that marks the transition from infectious trophozoite to transmissible cyst. They may interact with other cytoskeletal proteins such as microtubules in the microribbons or crossbridges, to maintain the integrity of the ventral disk. The polypeptide is Giardin subunit alpha-8 (Giardia intestinalis (Giardia lamblia)).